We begin with the raw amino-acid sequence, 610 residues long: MTIKFLSESTINRIAAGEVIERPASVVKELVENAVDASSTKIDIILERAGKNLIIISDDGIGMTDKELEIAVERHTTSKFDESDFLNINTFGFRGEALPSIAAISKMLITSKKRDADKAFQIKLIGGNEKQVTISVHNEGTKIEIRDLFFATPARLKFLRADKTELTATVDVVKKIALAHPKISFSLTHDGKNLLKLKGQNKDAETNLKQRIIDVIGDDFIKNAAYIDFKTPDFSICGYTSSPTYNRASSEDQFLFINNRPVKDKLLQVALRVAYQDYLARDRYPICAIFLQIDPQLVDVNVHPAKAEVRFHDPNYVRNLLIEAIKNALTNKSHVTSTTIASDVLELFKNPLVNKQSPVSKVINVNSKSADYRPTTHSTLNTVPQNHVCQKLIDTLSHAKIEQEVENRIEHEQQTRKQYKLGAAKAQLHTTYIISQTEDSIVITDQHAAHERLGYEKIKDYLKTEELIKQRLLIPEIVELPNEKKADCLYDHREKLYKLGLTLEKFGEKSIIVTEIPNILGDVNVQKLIQDLADHLSDFGKNIALTELIEHVTETYACHYSIRAGRKLSADEMNALLRQMENTPLSGQCNHGRPTYIELKLKDIERLFGR.

Belongs to the DNA mismatch repair MutL/HexB family.

Its function is as follows. This protein is involved in the repair of mismatches in DNA. It is required for dam-dependent methyl-directed DNA mismatch repair. May act as a 'molecular matchmaker', a protein that promotes the formation of a stable complex between two or more DNA-binding proteins in an ATP-dependent manner without itself being part of a final effector complex. This is DNA mismatch repair protein MutL from Rickettsia conorii (strain ATCC VR-613 / Malish 7).